The chain runs to 103 residues: MASFSLSILVFFFSALVLVPQGFAEYYLYPAYRPPQTKPPVNKPSHKEPPVNKPPHKEPPVHKPPHKDPPVNKPPQKESPVHKPPRKESPTHRHPPAEDNIHF.

An N-terminal signal peptide occupies residues 1–24 (MASFSLSILVFFFSALVLVPQGFA). Tandem repeats lie at residues 34 to 38 (PPQTK) and 39 to 43 (PPVNK). Positions 34 to 88 (PPQTKPPVNKPSHKEPPVNKPPHKEPPVHKPPHKDPPVNKPPQKESPVHKPPRKE) are 11 X 5 AA approximate tandem repeats of P-P-[QVHR]-[TNKH]-[KED]. The disordered stretch occupies residues 34–103 (PPQTKPPVNK…HPPAEDNIHF (70 aa)). A 3; approximate repeat occupies 44–48 (PSHKE). Residues 45 to 103 (SHKEPPVNKPPHKEPPVHKPPHKDPPVNKPPQKESPVHKPPRKESPTHRHPPAEDNIHF) are compositionally biased toward basic and acidic residues. A run of 6 repeats spans residues 49-53 (PPVNK), 54-58 (PPHKE), 59-63 (PPVHK), 64-68 (PPHKD), 69-73 (PPVNK), and 74-78 (PPQKE). The 10; approximate repeat unit spans residues 79-83 (SPVHK). Repeat 11 spans residues 84–88 (PPRKE).

Belongs to the plant proline-rich protein superfamily. ENOD12 family. In terms of tissue distribution, root nodules.

It is found in the secreted. The protein resides in the cell wall. Involved in the infection process during the plant-rhizobium interaction. The sequence is that of Early nodulin-12 (ENOD12) from Medicago truncatula (Barrel medic).